The sequence spans 342 residues: S-adenosylmethionine:tRNA ribosyltransferase-isomerase (342 aa).

Belongs to the QueA family. In terms of assembly, monomer.

It is found in the cytoplasm. The catalysed reaction is 7-aminomethyl-7-carbaguanosine(34) in tRNA + S-adenosyl-L-methionine = epoxyqueuosine(34) in tRNA + adenine + L-methionine + 2 H(+). It functions in the pathway tRNA modification; tRNA-queuosine biosynthesis. Its function is as follows. Transfers and isomerizes the ribose moiety from AdoMet to the 7-aminomethyl group of 7-deazaguanine (preQ1-tRNA) to give epoxyqueuosine (oQ-tRNA). The sequence is that of S-adenosylmethionine:tRNA ribosyltransferase-isomerase from Listeria monocytogenes serotype 4b (strain F2365).